The primary structure comprises 390 residues: MTFRKSNVYLNLVNSYIIDSPQPSSINYWWNMGSLLGLCLVIQILTGIFMAMHYSSNIELAFSSVEHIMRDVQGGWFLRYAHANGASFFFICMYIHMGKALYYGSYRSPRVLLWTIGVIIFILTMATAFLGYCCVYGQMSHWGATVITNLFSAIPFIGKDIVLWLWGGFAVSNPTIQRFFALHYLFPFVIAAVVIMHMMALHIHGSSNPLGITGNMDRLPMHGYFVFKDLITVFVFLIVFSLFVFFSPNTMGHPDNYIPGNPMVTPASIVPEWYLLPFYAILRSIPDKLMGVITMFSAILVLLVLPFTDRSVVRGNSFKVLSKLFFFLFVFNFVLLGQIGAVHVEVPYILMGQISTFLYFAYFLVFIPIISTIENILFYVGSRNNTDDLK.

Helical transmembrane passes span 32-52 (MGSLLGLCLVIQILTGIFMAM), 76-98 (WFLRYAHANGASFFFICMYIHMG), 113-133 (LWTIGVIIFILTMATAFLGYC), and 179-199 (FFALHYLFPFVIAAVVIMHMM). Heme b is bound by residues histidine 82 and histidine 96. Residues histidine 183 and histidine 197 each coordinate heme b. Residue histidine 202 participates in a ubiquinone binding. 4 consecutive transmembrane segments (helical) span residues 225–245 (FVFKDLITVFVFLIVFSLFVF), 289–309 (LMGVITMFSAILVLLVLPFTD), 321–341 (LSKLFFFLFVFNFVLLGQIGA), and 348–368 (YILMGQISTFLYFAYFLVFIP).

It belongs to the cytochrome b family. As to quaternary structure, fungal cytochrome b-c1 complex contains 10 subunits; 3 respiratory subunits, 2 core proteins and 5 low-molecular weight proteins. Cytochrome b-c1 complex is a homodimer. Heme b is required as a cofactor.

It is found in the mitochondrion inner membrane. Functionally, component of the ubiquinol-cytochrome c reductase complex (complex III or cytochrome b-c1 complex) that is part of the mitochondrial respiratory chain. The b-c1 complex mediates electron transfer from ubiquinol to cytochrome c. Contributes to the generation of a proton gradient across the mitochondrial membrane that is then used for ATP synthesis. This is Cytochrome b (COB) from Naumovozyma castellii (Yeast).